Reading from the N-terminus, the 118-residue chain is MRWALLVLLAFLSPASQKSSNLEGRTKSVTRQTGSSAEITCDLTVTNTFYIHWYLHQEGKAPQRLLYYDVSTARDVLESGLSPGKYYTHTPRRWSWILRLQNLIENDSGVYYCATWDR.

The first 17 residues, 1 to 17 (MRWALLVLLAFLSPASQ), serve as a signal peptide directing secretion. The Ig-like domain maps to 18-118 (KSSNLEGRTK…GVYYCATWDR (101 aa)). Cysteines 41 and 113 form a disulfide. An N-linked (GlcNAc...) asparagine glycan is attached at N106.

In terms of assembly, gamma-delta TR is a heterodimer composed of a gamma and delta chain; disulfide-linked. The gamma-delta TR is associated with the transmembrane signaling CD3 coreceptor proteins following the stoichiometry: a single gamma-delta TR heterodimer associates with one CD3D-CD3E heterodimer, one CD3G-CD3E heterodimer and one CD247 homodimer forming a stable octameric structure. Upon activation, gamma-delta TR complex associates with FCER1G to initiate intracellular signaling.

It localises to the cell membrane. V region of the variable domain of T cell receptor (TR) gamma chain that participates in the antigen recognition. Gamma-delta TRs recognize a variety of self and foreign non-peptide antigens frequently expressed at the epithelial boundaries between the host and external environment, including endogenous lipids presented by MH-like protein CD1D and phosphoantigens presented by butyrophilin-like molecule BTN3A1. Upon antigen recognition induces rapid, innate-like immune responses involved in pathogen clearance and tissue repair. Binding of gamma-delta TR complex to antigen triggers phosphorylation of immunoreceptor tyrosine-based activation motifs (ITAMs) in the CD3 chains by the LCK and FYN kinases, allowing the recruitment, phosphorylation, and activation of ZAP70 that facilitates phosphorylation of the scaffolding proteins LCP2 and LAT. This lead to the formation of a supramolecular signalosome that recruits the phospholipase PLCG1, resulting in calcium mobilization and ERK activation, ultimately leading to T cell expansion and differentiation into effector cells. Gamma-delta TRs are produced through somatic rearrangement of a limited repertoire of variable (V), diversity (D), and joining (J) genes. The potential diversity of gamma-delta TRs is conferred by the unique ability to rearrange (D) genes in tandem and to utilize all three reading frames. The combinatorial diversity is considerably increased by the sequence exonuclease trimming and random nucleotide (N) region additions which occur during the V-(D)-J rearrangements. This is T cell receptor gamma variable 3 from Homo sapiens (Human).